The following is a 123-amino-acid chain: Immunoglobulin lambda variable 5-45 (123 aa).

Positions 1–19 are cleaved as a signal peptide; the sequence is MAWTPLLLLFLSHCTGSLS. A framework-1 region spans residues 20–44; that stretch reads QAVLTQPSSLSASPGASASLTCTLC. One can recognise an Ig-like domain in the interval 20 to 123; that stretch reads QAVLTQPSSL…YCMIWHSSAS (104 aa). Cysteine 41 and cysteine 115 are joined by a disulfide. Residues 45–53 are complementarity-determining-1; that stretch reads SGINVGTYR. The segment at 54–70 is framework-2; it reads IYWYQQKPGSPPQYLLR. A disordered region spans residues 68–92; that stretch reads LLRYKSDSDKQQGSGVPSRFSGSKD. Residues 71–77 are complementarity-determining-2; sequence YKSDSDK. Residues 78 to 92 show a composition bias toward polar residues; that stretch reads QQGSGVPSRFSGSKD. The interval 78 to 115 is framework-3; that stretch reads QQGSGVPSRFSGSKDASANAGILLISGLQSEDEADYYC. The complementarity-determining-3 stretch occupies residues 116-123; the sequence is MIWHSSAS.

In terms of assembly, immunoglobulins are composed of two identical heavy chains and two identical light chains; disulfide-linked.

It is found in the secreted. The protein localises to the cell membrane. In terms of biological role, v region of the variable domain of immunoglobulin light chains that participates in the antigen recognition. Immunoglobulins, also known as antibodies, are membrane-bound or secreted glycoproteins produced by B lymphocytes. In the recognition phase of humoral immunity, the membrane-bound immunoglobulins serve as receptors which, upon binding of a specific antigen, trigger the clonal expansion and differentiation of B lymphocytes into immunoglobulins-secreting plasma cells. Secreted immunoglobulins mediate the effector phase of humoral immunity, which results in the elimination of bound antigens. The antigen binding site is formed by the variable domain of one heavy chain, together with that of its associated light chain. Thus, each immunoglobulin has two antigen binding sites with remarkable affinity for a particular antigen. The variable domains are assembled by a process called V-(D)-J rearrangement and can then be subjected to somatic hypermutations which, after exposure to antigen and selection, allow affinity maturation for a particular antigen. The chain is Immunoglobulin lambda variable 5-45 from Homo sapiens (Human).